A 67-amino-acid polypeptide reads, in one-letter code: Large ribosomal subunit protein bL31 (67 aa).

C16, C18, C36, and C39 together coordinate Zn(2+).

This sequence belongs to the bacterial ribosomal protein bL31 family. Type A subfamily. In terms of assembly, part of the 50S ribosomal subunit. The cofactor is Zn(2+).

Functionally, binds the 23S rRNA. The protein is Large ribosomal subunit protein bL31 of Aliarcobacter butzleri (strain RM4018) (Arcobacter butzleri).